A 378-amino-acid chain; its full sequence is Leukocyte elastase inhibitor (378 aa).

Position 1 is an N-acetylmethionine (Met-1). The residue at position 137 (Lys-137) is an N6-acetyllysine. Ser-299 bears the Phosphoserine mark. The tract at residues 350 to 378 (DFIADHPFIFFIRHNPSSNILFLGRLSSP) is CARD-binding motif (CBM).

The protein belongs to the serpin family. Ov-serpin subfamily. In terms of assembly, monomer. Interacts (via C-terminus) with CASP1; CASP4 (via CARD domain) and CASP5; these interactions regulate the activity of inflammatory caspases. Interacts with PRTN3. Interacts with GZMH.

It localises to the secreted. Its subcellular location is the cytoplasm. It is found in the cytolytic granule. The protein localises to the early endosome. In terms of biological role, neutrophil serine protease inhibitor that plays an essential role in the regulation of the innate immune response, inflammation and cellular homeostasis. Acts primarily to protect the cell from proteases released in the cytoplasm during stress or infection. These proteases are important in killing microbes but when released from granules, these potent enzymes also destroy host proteins and contribute to mortality. Regulates the activity of the neutrophil proteases elastase, cathepsin G, proteinase-3, chymase, chymotrypsin, and kallikrein-3. Also acts as a potent intracellular inhibitor of GZMH by directly blocking its proteolytic activity. During inflammation, limits the activity of inflammatory caspases CASP1, CASP4 and CASP5 by suppressing their caspase-recruitment domain (CARD) oligomerization and enzymatic activation. When secreted, promotes the proliferation of beta-cells via its protease inhibitory function. Its function is as follows. May be cleaved leading to a loss of its anti-protease activity and to the appearance of an endonuclease activity. However no catalytic site was identified. This chain is Leukocyte elastase inhibitor (SERPINB1), found in Sus scrofa (Pig).